The chain runs to 30 residues: Cyclotide mden-I (30 aa).

Positions 1–30 (GIPCGESCVYIPCITTAIGCSCKNKVCYRN) form a cross-link, cyclopeptide (Gly-Asn). Intrachain disulfides connect Cys4-Cys20, Cys8-Cys22, and Cys13-Cys27.

The protein belongs to the cyclotide family. Bracelet subfamily. This is a cyclic peptide.

Its function is as follows. Probably participates in a plant defense mechanism. The sequence is that of Cyclotide mden-I from Melicytus dentatus (Tree violet).